Reading from the N-terminus, the 211-residue chain is LexA repressor (211 aa).

Residues 27-47 constitute a DNA-binding region (H-T-H motif); sequence QTEIARAFGFKGVRAAQYHLE. Catalysis depends on for autocatalytic cleavage activity residues serine 131 and lysine 168.

The protein belongs to the peptidase S24 family. Homodimer.

It carries out the reaction Hydrolysis of Ala-|-Gly bond in repressor LexA.. Functionally, represses a number of genes involved in the response to DNA damage (SOS response), including recA and lexA. In the presence of single-stranded DNA, RecA interacts with LexA causing an autocatalytic cleavage which disrupts the DNA-binding part of LexA, leading to derepression of the SOS regulon and eventually DNA repair. The sequence is that of LexA repressor from Stenotrophomonas maltophilia (strain R551-3).